A 154-amino-acid polypeptide reads, in one-letter code: Protein X (154 aa).

Residues Pro-68–Phe-117 form a mitochondrial targeting sequence region.

The protein belongs to the orthohepadnavirus protein X family. As to quaternary structure, may form homodimer. May interact with host CEBPA, CFLAR, CREB1, DDB1, E4F1, HBXIP, HSPD1/HSP60, NFKBIA, POLR2E and SMAD4. Interacts with host SMC5-SMC6 complex and induces its degradation. Interacts with host TRPC4AP; leading to prevent ubiquitination of TRPC4AP. Interacts with host PLSCR1; this interaction promotes ubiquitination and degradation of HBx and impairs HBx-mediated cell proliferation. In terms of processing, a fraction may be phosphorylated in insect cells and HepG2 cells, a human hepatoblastoma cell line. Phosphorylated in vitro by host protein kinase C or mitogen-activated protein kinase. N-acetylated in insect cells.

It localises to the host cytoplasm. The protein resides in the host nucleus. The protein localises to the host mitochondrion. Functionally, multifunctional protein that plays a role in silencing host antiviral defenses and promoting viral transcription. Does not seem to be essential for HBV infection. May be directly involved in development of cirrhosis and liver cancer (hepatocellular carcinoma). Most of cytosolic activities involve modulation of cytosolic calcium. The effect on apoptosis is controversial depending on the cell types in which the studies have been conducted. May induce apoptosis by localizing in mitochondria and causing loss of mitochondrial membrane potential. May also modulate apoptosis by binding host CFLAR, a key regulator of the death-inducing signaling complex (DISC). Promotes viral transcription by using the host E3 ubiquitin ligase DDB1 to target the SMC5-SMC6 complex to proteasomal degradation. This host complex would otherwise bind to viral episomal DNA, and prevents its transcription. Moderately stimulates transcription of many different viral and cellular transcription elements. Promoters and enhancers stimulated by HBx contain DNA binding sites for NF-kappa-B, AP-1, AP-2, c-EBP, ATF/CREB, or the calcium-activated factor NF-AT. This is Protein X from Hepatitis B virus genotype D subtype ayw (isolate France/Tiollais/1979) (HBV-D).